We begin with the raw amino-acid sequence, 503 residues long: Maturase K (503 aa).

Belongs to the intron maturase 2 family. MatK subfamily.

The protein resides in the plastid. Its subcellular location is the chloroplast. Its function is as follows. Usually encoded in the trnK tRNA gene intron. Probably assists in splicing its own and other chloroplast group II introns. This Vicia sativa (Spring vetch) protein is Maturase K.